We begin with the raw amino-acid sequence, 427 residues long: 3-phosphoshikimate 1-carboxyvinyltransferase (427 aa).

The 3-phosphoshikimate site is built by Lys22, Ser23, and Arg27. Phosphoenolpyruvate is bound at residue Lys22. Phosphoenolpyruvate-binding residues include Gly96 and Arg124. 3-phosphoshikimate-binding residues include Ser169, Ser170, Gln171, Ser197, Asp313, Asn336, and Lys340. Gln171 lines the phosphoenolpyruvate pocket. Asp313 functions as the Proton acceptor in the catalytic mechanism. Positions 344, 386, and 411 each coordinate phosphoenolpyruvate.

Belongs to the EPSP synthase family. Monomer.

Its subcellular location is the cytoplasm. The catalysed reaction is 3-phosphoshikimate + phosphoenolpyruvate = 5-O-(1-carboxyvinyl)-3-phosphoshikimate + phosphate. Its pathway is metabolic intermediate biosynthesis; chorismate biosynthesis; chorismate from D-erythrose 4-phosphate and phosphoenolpyruvate: step 6/7. Catalyzes the transfer of the enolpyruvyl moiety of phosphoenolpyruvate (PEP) to the 5-hydroxyl of shikimate-3-phosphate (S3P) to produce enolpyruvyl shikimate-3-phosphate and inorganic phosphate. This Klebsiella pneumoniae subsp. pneumoniae (strain ATCC 700721 / MGH 78578) protein is 3-phosphoshikimate 1-carboxyvinyltransferase.